A 208-amino-acid polypeptide reads, in one-letter code: MGSFANGQNGSELGIQTPATGSNAALEPPTTSAAAPRCPRLGMAMVAARAAALVMALLSVSLMVSAKQRGTLAIFGIEIPLYAKWSLSDSLQSLVGISAAAAAYSLAQLLSIAHTALKKAPVVPSRRYAWMLLAGDQVFAYAMLSAGSAAAAVANLNRTGVRHTALPNFCKPLPRFCDLSAASIACAFLGCAFLAASAVIDVIWLSRL.

2 stretches are compositionally biased toward polar residues: residues 1-11 (MGSFANGQNGS) and 17-33 (TPAT…TTSA). Positions 1–33 (MGSFANGQNGSELGIQTPATGSNAALEPPTTSA) are disordered. At 1 to 43 (MGSFANGQNGSELGIQTPATGSNAALEPPTTSAAAPRCPRLGM) the chain is on the cytoplasmic side. A helical membrane pass occupies residues 44–64 (AMVAARAAALVMALLSVSLMV). Topologically, residues 65–92 (SAKQRGTLAIFGIEIPLYAKWSLSDSLQ) are extracellular. The chain crosses the membrane as a helical span at residues 93–113 (SLVGISAAAAAYSLAQLLSIA). The Cytoplasmic portion of the chain corresponds to 114-128 (HTALKKAPVVPSRRY). Residues 129 to 149 (AWMLLAGDQVFAYAMLSAGSA) form a helical membrane-spanning segment. At 150-183 (AAAVANLNRTGVRHTALPNFCKPLPRFCDLSAAS) the chain is on the extracellular side. The N-linked (GlcNAc...) asparagine glycan is linked to Asn-157. Residues 184 to 204 (IACAFLGCAFLAASAVIDVIW) traverse the membrane as a helical segment. The Cytoplasmic portion of the chain corresponds to 205–208 (LSRL).

The protein belongs to the Casparian strip membrane proteins (CASP) family. In terms of assembly, homodimer and heterodimers.

It localises to the cell membrane. In Hordeum vulgare subsp. vulgare (Domesticated barley), this protein is CASP-like protein 3A1.